The following is a 101-amino-acid chain: MTTNNLVLSGTITRSRRFKSPAGIAHSVIMLEHKSQRYEADMLRNVYVQIQVILSGPRFESVADNLKAGVEVQVQGFMTLQQGRNGQNRLVIHAENVELKT.

Residues 1–101 (MTTNNLVLSG…IHAENVELKT (101 aa)) enclose the SSB domain.

This sequence belongs to the PriB family. In terms of assembly, homodimer. Interacts with PriA and DnaT. Component of the replication restart primosome. Primosome assembly occurs via a 'hand-off' mechanism. PriA binds to replication forks, subsequently PriB then DnaT bind; DnaT then displaces ssDNA to generate the helicase loading substrate.

Functionally, involved in the restart of stalled replication forks, which reloads the replicative helicase on sites other than the origin of replication; the PriA-PriB pathway is the major replication restart pathway. During primosome assembly it facilitates complex formation between PriA and DnaT on DNA; stabilizes PriA on DNA. Stimulates the DNA unwinding activity of PriA helicase. This is Replication restart protein PriB from Shewanella oneidensis (strain ATCC 700550 / JCM 31522 / CIP 106686 / LMG 19005 / NCIMB 14063 / MR-1).